We begin with the raw amino-acid sequence, 255 residues long: Imidazole glycerol phosphate synthase subunit HisF (255 aa).

Residues Asp-12 and Asp-131 contribute to the active site.

The protein belongs to the HisA/HisF family. Heterodimer of HisH and HisF.

The protein resides in the cytoplasm. The catalysed reaction is 5-[(5-phospho-1-deoxy-D-ribulos-1-ylimino)methylamino]-1-(5-phospho-beta-D-ribosyl)imidazole-4-carboxamide + L-glutamine = D-erythro-1-(imidazol-4-yl)glycerol 3-phosphate + 5-amino-1-(5-phospho-beta-D-ribosyl)imidazole-4-carboxamide + L-glutamate + H(+). Its pathway is amino-acid biosynthesis; L-histidine biosynthesis; L-histidine from 5-phospho-alpha-D-ribose 1-diphosphate: step 5/9. In terms of biological role, IGPS catalyzes the conversion of PRFAR and glutamine to IGP, AICAR and glutamate. The HisF subunit catalyzes the cyclization activity that produces IGP and AICAR from PRFAR using the ammonia provided by the HisH subunit. This Ruthia magnifica subsp. Calyptogena magnifica protein is Imidazole glycerol phosphate synthase subunit HisF.